The following is a 234-amino-acid chain: Orotidine 5'-phosphate decarboxylase (234 aa).

Residues Asp10, Lys32, 59–68 (DLKFHDIPNT), Thr119, Arg180, Gln189, Gly209, and Arg210 each bind substrate. The active-site Proton donor is the Lys61.

The protein belongs to the OMP decarboxylase family. Type 1 subfamily. Homodimer.

It catalyses the reaction orotidine 5'-phosphate + H(+) = UMP + CO2. The protein operates within pyrimidine metabolism; UMP biosynthesis via de novo pathway; UMP from orotate: step 2/2. In terms of biological role, catalyzes the decarboxylation of orotidine 5'-monophosphate (OMP) to uridine 5'-monophosphate (UMP). The protein is Orotidine 5'-phosphate decarboxylase of Mannheimia succiniciproducens (strain KCTC 0769BP / MBEL55E).